Reading from the N-terminus, the 335-residue chain is Beta-ketoacyl-[acyl-carrier-protein] synthase III (335 aa).

Catalysis depends on residues Cys120 and His261. The ACP-binding stretch occupies residues 262–266; it reads QANER. The active site involves Asn291.

The protein belongs to the thiolase-like superfamily. FabH family. As to quaternary structure, homodimer.

Its subcellular location is the cytoplasm. It catalyses the reaction malonyl-[ACP] + acetyl-CoA + H(+) = 3-oxobutanoyl-[ACP] + CO2 + CoA. Its pathway is lipid metabolism; fatty acid biosynthesis. Its function is as follows. Catalyzes the condensation reaction of fatty acid synthesis by the addition to an acyl acceptor of two carbons from malonyl-ACP. Catalyzes the first condensation reaction which initiates fatty acid synthesis and may therefore play a role in governing the total rate of fatty acid production. Possesses both acetoacetyl-ACP synthase and acetyl transacylase activities. Its substrate specificity determines the biosynthesis of branched-chain and/or straight-chain of fatty acids. This chain is Beta-ketoacyl-[acyl-carrier-protein] synthase III, found in Chlamydia pneumoniae (Chlamydophila pneumoniae).